The following is a 138-amino-acid chain: Large ribosomal subunit protein bL17 (138 aa).

This sequence belongs to the bacterial ribosomal protein bL17 family. In terms of assembly, part of the 50S ribosomal subunit. Contacts protein L32.

The chain is Large ribosomal subunit protein bL17 from Nitrobacter hamburgensis (strain DSM 10229 / NCIMB 13809 / X14).